Here is a 4621-residue protein sequence, read N- to C-terminus: Dynein axonemal heavy chain 5 (4621 aa).

Residues 1–1938 (MFRIGRRQLW…MIHITDVAFI (1938 aa)) are stem. Coiled-coil stretches lie at residues 260–305 (WIKQ…DQLK) and 803–825 (LENAFAKIKDLELLLDRVNDLIE). Positions 901–921 (VCHENASPSGNTSGRREGHSE) are disordered. 2 coiled-coil regions span residues 1065–1094 (AVKNNEDSDSDAEVEENELQETLEIASINL) and 1433–1462 (DVNIEKINNELLEFQNRCRKLPRALKDWQA). AAA stretches follow at residues 1939-2161 (YQNE…VLRT), 2221-2440 (TAIS…IQNL), 2547-2800 (VYPP…IWQG), and 2913-3167 (LYNE…FRRS). ATP is bound by residues 1977-1984 (GPAGTGKT) and 2259-2266 (GPSGSGKT). The segment at 3182–3479 (YKFIYEEKHM…QTLLEDADRC (298 aa)) is stalk. Coiled coils occupy residues 3186–3299 (YEEK…QTIK), 3423–3490 (LKAN…STLI), and 3729–3814 (ILTE…EEYR). 2 AAA regions span residues 3564-3794 (LIDA…EVTQ) and 4009-4223 (ARKY…FIQN). Residues 4389–4417 (FLRQEIDRMQRVLSLVRSTLTELKLAVDG) adopt a coiled-coil conformation.

It belongs to the dynein heavy chain family. In terms of assembly, interacts with DNAL1. Consists of at least two heavy chains and a number of intermediate and light chains. As to expression, strongly expressed in lung and kidney and weaker expression seen in brain, heart and testis. In the brain, expressed in ependymal cells lining the brain ventricles and the aqueduct.

The protein localises to the cytoplasm. Its subcellular location is the cytoskeleton. It is found in the cilium axoneme. In terms of biological role, force generating protein of respiratory cilia. Produces force towards the minus ends of microtubules. Dynein has ATPase activity; the force-producing power stroke is thought to occur on release of ADP. Required for structural and functional integrity of the cilia of ependymal cells lining the brain ventricles. This chain is Dynein axonemal heavy chain 5, found in Mus musculus (Mouse).